A 415-amino-acid chain; its full sequence is Gamma-glutamyl phosphate reductase (415 aa).

This sequence belongs to the gamma-glutamyl phosphate reductase family.

Its subcellular location is the cytoplasm. The enzyme catalyses L-glutamate 5-semialdehyde + phosphate + NADP(+) = L-glutamyl 5-phosphate + NADPH + H(+). The protein operates within amino-acid biosynthesis; L-proline biosynthesis; L-glutamate 5-semialdehyde from L-glutamate: step 2/2. Its function is as follows. Catalyzes the NADPH-dependent reduction of L-glutamate 5-phosphate into L-glutamate 5-semialdehyde and phosphate. The product spontaneously undergoes cyclization to form 1-pyrroline-5-carboxylate. This chain is Gamma-glutamyl phosphate reductase, found in Thermotoga sp. (strain RQ2).